Consider the following 274-residue polypeptide: Mitochondrial outer membrane protein porin 1 (274 aa).

It belongs to the eukaryotic mitochondrial porin (TC 1.B.8.1) family. As to expression, expressed in shoots and roots. Also expressed in callus, leaves, panicles, sheaths and stems.

It localises to the mitochondrion outer membrane. Its function is as follows. Forms a channel through the mitochondrial outer membrane that allows diffusion of small hydrophilic molecules. The channel adopts an open conformation at low or zero membrane potential and a closed conformation at potentials above 30-40 mV. The open state has a weak anion selectivity whereas the closed state is cation-selective. This is Mitochondrial outer membrane protein porin 1 (VDAC1) from Oryza sativa subsp. japonica (Rice).